Consider the following 336-residue polypeptide: Flavonoid 4'-O-methyltransferase 5 (336 aa).

Tyrosine 140 and aspartate 203 together coordinate S-adenosyl-L-methionine. The Proton acceptor role is filled by histidine 241.

The protein belongs to the class I-like SAM-binding methyltransferase superfamily. Cation-independent O-methyltransferase family. In terms of assembly, homodimer. In terms of tissue distribution, expressed in leaves.

The enzyme catalyses genkwanin + S-adenosyl-L-methionine = apigenin 4',7-dimethyl ether + S-adenosyl-L-homocysteine. It catalyses the reaction cirsiliol + S-adenosyl-L-methionine = eupatorin + S-adenosyl-L-homocysteine + H(+). The catalysed reaction is cirsimaritin + S-adenosyl-L-methionine = salvigenin + S-adenosyl-L-homocysteine + H(+). It carries out the reaction scutellarein 7-methyl ether + S-adenosyl-L-methionine = ladanein + S-adenosyl-L-homocysteine + H(+). The enzyme catalyses (2S)-sakuranetin + S-adenosyl-L-methionine = (2S)-naringenin 4',7-dimethyl ether + S-adenosyl-L-homocysteine + H(+). The protein operates within flavonoid metabolism. With respect to regulation, substrate inhibition by genkwanin (GENK) at concentrations above 10 mM. Flavonoid 4'-O-methyltransferase involved in the biosynthesis of polymethoxylated flavonoids natural products such as nevadensin and salvigenin, aroma compounds which contribute to the flavor of sweet basil, and exhibit pharmacological activities such as anti-allergic, anti-oxidant, antibacterial, anti-proliferative, and anti-inflammatory effects. Catalyzes S-adenosylmethionine-dependent regioselective 4'-O-methylation of flavonoids; active on various hydroxylated flavonoid substrates, including scutellarein-7-methyl ether (SCU7Me) and, with a lower efficiency, cirsimaritin (CIRM), sakuranetin (NAR7Me), ladanein (LAD) and genkwanin (GENK). This chain is Flavonoid 4'-O-methyltransferase 5, found in Ocimum basilicum (Sweet basil).